A 148-amino-acid polypeptide reads, in one-letter code: SsrA-binding protein (148 aa).

The protein belongs to the SmpB family.

It is found in the cytoplasm. Required for rescue of stalled ribosomes mediated by trans-translation. Binds to transfer-messenger RNA (tmRNA), required for stable association of tmRNA with ribosomes. tmRNA and SmpB together mimic tRNA shape, replacing the anticodon stem-loop with SmpB. tmRNA is encoded by the ssrA gene; the 2 termini fold to resemble tRNA(Ala) and it encodes a 'tag peptide', a short internal open reading frame. During trans-translation Ala-aminoacylated tmRNA acts like a tRNA, entering the A-site of stalled ribosomes, displacing the stalled mRNA. The ribosome then switches to translate the ORF on the tmRNA; the nascent peptide is terminated with the 'tag peptide' encoded by the tmRNA and targeted for degradation. The ribosome is freed to recommence translation, which seems to be the essential function of trans-translation. This Burkholderia ambifaria (strain ATCC BAA-244 / DSM 16087 / CCUG 44356 / LMG 19182 / AMMD) (Burkholderia cepacia (strain AMMD)) protein is SsrA-binding protein.